The primary structure comprises 88 residues: Small ribosomal subunit protein bS20 (88 aa).

This sequence belongs to the bacterial ribosomal protein bS20 family.

Functionally, binds directly to 16S ribosomal RNA. The protein is Small ribosomal subunit protein bS20 of Legionella pneumophila (strain Paris).